The sequence spans 249 residues: DNA repair protein RecO (249 aa).

The protein belongs to the RecO family.

In terms of biological role, involved in DNA repair and RecF pathway recombination. The sequence is that of DNA repair protein RecO from Polaromonas sp. (strain JS666 / ATCC BAA-500).